A 154-amino-acid chain; its full sequence is Lipoprotein signal peptidase (154 aa).

Transmembrane regions (helical) follow at residues 4-24 (IIIP…KLWI), 62-82 (LFTL…MKHI), and 84-104 (GSYW…GNFI). Residues Asp114 and Asp130 contribute to the active site. A helical transmembrane segment spans residues 125–145 (IFNVADSYLTIGIICLMIALW).

Belongs to the peptidase A8 family.

It is found in the cell membrane. It carries out the reaction Release of signal peptides from bacterial membrane prolipoproteins. Hydrolyzes -Xaa-Yaa-Zaa-|-(S,diacylglyceryl)Cys-, in which Xaa is hydrophobic (preferably Leu), and Yaa (Ala or Ser) and Zaa (Gly or Ala) have small, neutral side chains.. It participates in protein modification; lipoprotein biosynthesis (signal peptide cleavage). In terms of biological role, this protein specifically catalyzes the removal of signal peptides from prolipoproteins. This is Lipoprotein signal peptidase from Streptococcus agalactiae serotype Ia (strain ATCC 27591 / A909 / CDC SS700).